Reading from the N-terminus, the 262-residue chain is MDYSKMKPSEVRNLIREGKITGPTSGMCAGYAQANLVILPKELAYDFLLFSQRNPKACPILEVSDVGSRSLRYIAEDADIAKDIPKYRVYEDGILTGEYTSVEHLWRDDFVSFLIGCSFSFESELLEAGVPVRHIEENCNVPMFITNIECEPAGIFNGKMVVSMRPIPYDQIVKSVMVTGAMPKVHGTPIHIGEPSVIGISDISKPDFGDSVNIKEGEVPVFWPCGVTPQSVVMNVKPKIVITHSPGHMLITDTKNIDIKFS.

The protein belongs to the D-glutamate cyclase family.

The chain is Putative hydro-lyase Cbei_2760 from Clostridium beijerinckii (strain ATCC 51743 / NCIMB 8052) (Clostridium acetobutylicum).